A 3189-amino-acid polypeptide reads, in one-letter code: Beauvericin nonribosomal cyclodepsipeptide synthetase (3189 aa).

Positions 73-466 are condensation 1; it reads HAMYEISQHV…EQLQSAADDA (394 aa). Residues 202 to 223 are disordered; that stretch reads DSLPLTPDSSGGSDSDSPSTLK. Over residues 208 to 220 the composition is skewed to low complexity; sequence PDSSGGSDSDSPS. An adenylation 1 region spans residues 507–901; sequence AESPSDPAVL…GRIDSQVKIR (395 aa). The Carrier 1 domain occupies 1036 to 1112; the sequence is TLETGPEARL…RLQAVMSGDS (77 aa). S1073 carries the post-translational modification O-(pantetheine 4'-phosphoryl)serine. The segment at 1136 to 1569 is condensation 2; that stretch reads SYSQGRLWFL…KSLISVLPLT (434 aa). Positions 1599 to 2004 are adenylation 2; sequence FRSQVATCPD…GRMDFQFKIR (406 aa). Positions 2072–2211 are S-adenosyl-L-methionine-dependent N-methyltransferase; that stretch reads MYNGIDAISP…FPTVEYLTRV (140 aa). 2 consecutive Carrier domains span residues 2557–2631 and 2654–2728; these read CPIS…REGL and APRN…ELGQ. 2 positions are modified to O-(pantetheine 4'-phosphoryl)serine: S2591 and S2688. A condensation 3 region spans residues 2773–3181; that stretch reads QDVYPATHMQ…AYLMEEVCRL (409 aa).

The protein belongs to the NRP synthetase family.

It carries out the reaction 3 (R)-2-hydroxy-3-methylbutanoate + 3 L-phenylalanine + 3 S-adenosyl-L-methionine + 6 ATP = beauvericin + 6 AMP + 3 S-adenosyl-L-homocysteine + 6 diphosphate + 6 H(+). Its function is as follows. Beauvericin nonribosomal cyclodepsipeptide synthetase; part of the gene cluster that mediates the biosynthesis of beauvericin (BEA), a non-ribosomal cyclic hexadepsipeptide that shows antibiotic, antifungal, insecticidal, and cancer cell antiproliferative and antihaptotactic activity. Ketoisovalerate reductase BEA2 catalyzes the NADPH-specific reduction of ketoisovaleric acid to hydroxyisovalerate, a precursor for beauvericin biosynthesis. The nonribosomal cyclodepsipeptide synthetase BEA1 then catalyzes the formation of beauvericin via condensation and cyclization of 3 dipeptidol monomers, each composed of one unit of hydroxyisovalerate and one unit of N-methyl-phenylalanine. The sequence is that of Beauvericin nonribosomal cyclodepsipeptide synthetase (Beas) from Beauveria bassiana (White muscardine disease fungus).